Reading from the N-terminus, the 116-residue chain is Nucleoid-associated protein SACE_0254 (116 aa).

Residues 90–116 (LQQEKMGPVTGALGGGQGLGGLGLPGL) are disordered. Residues 101 to 116 (ALGGGQGLGGLGLPGL) show a composition bias toward gly residues.

The protein belongs to the YbaB/EbfC family. Homodimer.

It localises to the cytoplasm. It is found in the nucleoid. Its function is as follows. Binds to DNA and alters its conformation. May be involved in regulation of gene expression, nucleoid organization and DNA protection. The protein is Nucleoid-associated protein SACE_0254 of Saccharopolyspora erythraea (strain ATCC 11635 / DSM 40517 / JCM 4748 / NBRC 13426 / NCIMB 8594 / NRRL 2338).